The chain runs to 99 residues: Large ribosomal subunit protein uL23c (99 aa).

Belongs to the universal ribosomal protein uL23 family. In terms of assembly, part of the 50S ribosomal subunit.

It localises to the plastid. The protein localises to the chloroplast. Functionally, binds to 23S rRNA. This is Large ribosomal subunit protein uL23c (rpl23) from Emiliania huxleyi (Coccolithophore).